The sequence spans 229 residues: Flagellar L-ring protein (229 aa).

The signal sequence occupies residues 1–23 (MSPLTRIALALAASAALVLALTA). Cys24 carries N-palmitoyl cysteine lipidation. Cys24 carries the S-diacylglycerol cysteine lipid modification.

This sequence belongs to the FlgH family. As to quaternary structure, the basal body constitutes a major portion of the flagellar organelle and consists of four rings (L,P,S, and M) mounted on a central rod.

Its subcellular location is the cell outer membrane. The protein localises to the bacterial flagellum basal body. Its function is as follows. Assembles around the rod to form the L-ring and probably protects the motor/basal body from shearing forces during rotation. This is Flagellar L-ring protein from Anaeromyxobacter dehalogenans (strain 2CP-C).